The following is a 333-amino-acid chain: Putative pectinesterase 14 (333 aa).

The signal sequence occupies residues 1–16 (MLFFILFLSIISPIES). N-linked (GlcNAc...) asparagine glycosylation is found at Asn108 and Asn114. Residue Thr116 coordinates substrate. N-linked (GlcNAc...) asparagine glycosylation occurs at Asn133. Gln151 lines the substrate pocket. Asp174 (proton donor) is an active-site residue. The active-site Nucleophile is the Asp195. Arg253 provides a ligand contact to substrate. N-linked (GlcNAc...) asparagine glycosylation is found at Asn302 and Asn323.

This sequence belongs to the pectinesterase family. Expressed in flower buds.

Its subcellular location is the secreted. The protein localises to the cell wall. It catalyses the reaction [(1-&gt;4)-alpha-D-galacturonosyl methyl ester](n) + n H2O = [(1-&gt;4)-alpha-D-galacturonosyl](n) + n methanol + n H(+). The protein operates within glycan metabolism; pectin degradation; 2-dehydro-3-deoxy-D-gluconate from pectin: step 1/5. Its function is as follows. Acts in the modification of cell walls via demethylesterification of cell wall pectin. The sequence is that of Putative pectinesterase 14 (PME14) from Arabidopsis thaliana (Mouse-ear cress).